The primary structure comprises 219 residues: Probable nicotinate-nucleotide adenylyltransferase (219 aa).

It belongs to the NadD family.

The enzyme catalyses nicotinate beta-D-ribonucleotide + ATP + H(+) = deamido-NAD(+) + diphosphate. Its pathway is cofactor biosynthesis; NAD(+) biosynthesis; deamido-NAD(+) from nicotinate D-ribonucleotide: step 1/1. In terms of biological role, catalyzes the reversible adenylation of nicotinate mononucleotide (NaMN) to nicotinic acid adenine dinucleotide (NaAD). This is Probable nicotinate-nucleotide adenylyltransferase from Cronobacter sakazakii (strain ATCC BAA-894) (Enterobacter sakazakii).